Consider the following 119-residue polypeptide: Large ribosomal subunit protein bL19 (119 aa).

The protein belongs to the bacterial ribosomal protein bL19 family.

Functionally, this protein is located at the 30S-50S ribosomal subunit interface and may play a role in the structure and function of the aminoacyl-tRNA binding site. The sequence is that of Large ribosomal subunit protein bL19 from Petrotoga mobilis (strain DSM 10674 / SJ95).